Consider the following 254-residue polypeptide: Methylthioribulose-1-phosphate dehydratase (254 aa).

Cys-110 lines the substrate pocket. Positions 127 and 129 each coordinate Zn(2+). Glu-156 acts as the Proton donor/acceptor in catalysis. Residue His-212 participates in Zn(2+) binding.

It belongs to the aldolase class II family. MtnB subfamily. It depends on Zn(2+) as a cofactor.

It localises to the cytoplasm. It carries out the reaction 5-(methylsulfanyl)-D-ribulose 1-phosphate = 5-methylsulfanyl-2,3-dioxopentyl phosphate + H2O. It participates in amino-acid biosynthesis; L-methionine biosynthesis via salvage pathway; L-methionine from S-methyl-5-thio-alpha-D-ribose 1-phosphate: step 2/6. Catalyzes the dehydration of methylthioribulose-1-phosphate (MTRu-1-P) into 2,3-diketo-5-methylthiopentyl-1-phosphate (DK-MTP-1-P). The sequence is that of Methylthioribulose-1-phosphate dehydratase from Talaromyces marneffei (strain ATCC 18224 / CBS 334.59 / QM 7333) (Penicillium marneffei).